The following is an 895-amino-acid chain: ABC-transporter-regulating transcription factor (895 aa).

The segment at residues 69 to 96 is a DNA-binding region (zn(2)-C6 fungal-type); it reads CDMCRKKKIKCDGKMPKCSHCTNYKTDC. The tract at residues 156–218 is disordered; that stretch reads HASGSNTPHN…QKESETEVEG (63 aa). Polar residues predominate over residues 158–207; the sequence is SGSNTPHNPQKINIPSQSQIAMSQQNSSSHYSTPRLESQSSPRTAATSPE. The chain crosses the membrane as a helical span at residues 648–668; the sequence is CVWLILYYPVSALVTLFANIL. The disordered stretch occupies residues 726–813; the sequence is ESYSKKKRKS…TGVSTNIPPN (88 aa). Residues 755–765 show a composition bias toward low complexity; that stretch reads PSTTQPTQAPS.

In terms of assembly, interacts with ncaA.

It localises to the nucleus. Its subcellular location is the membrane. Transcription factor that regulates expression of the genes related to ergosterol biosynthesis, including erg3B, erg24A, erg25A, as well as cyp51A that encodes a target protein of azoles. In coordination with ffmA and ncaA, is responsible for the expression of the ABC transporter abcC/cdr1B/abcG1 related to azole resistance. Directly binds both the cyp51A and abcC/cdr1B/abcG1 promoters at a conserved 34 bp region called the atrR response element (ATRE). AtrR also binds to the promoter regions of both the sterol response transcription factor srbA and atrR genes themselves, the latter suggesting the possibility that atrR is autoregulated. Also regulates iron uptake, most likely via cooperation with SrbA. AtrR is necessary for hypoxia adaptation and virulence. The protein is ABC-transporter-regulating transcription factor of Aspergillus fumigatus (strain ATCC MYA-4609 / CBS 101355 / FGSC A1100 / Af293) (Neosartorya fumigata).